We begin with the raw amino-acid sequence, 357 residues long: Phenylalanine--tRNA ligase alpha subunit (357 aa).

A Mg(2+)-binding site is contributed by Glu257.

This sequence belongs to the class-II aminoacyl-tRNA synthetase family. Phe-tRNA synthetase alpha subunit type 1 subfamily. In terms of assembly, tetramer of two alpha and two beta subunits. Mg(2+) serves as cofactor.

It localises to the cytoplasm. The catalysed reaction is tRNA(Phe) + L-phenylalanine + ATP = L-phenylalanyl-tRNA(Phe) + AMP + diphosphate + H(+). This chain is Phenylalanine--tRNA ligase alpha subunit, found in Ruegeria sp. (strain TM1040) (Silicibacter sp.).